A 136-amino-acid polypeptide reads, in one-letter code: MPTIQQLIRLGRSVKASKTASPALEKCPQKRGVCTRVYTTTPKKPNSALRKVARVRLSNKIEVTAYIPGEGHNLQEHSIVLIRGGRVKDLPGVRYHIVRGSLDTSGVADRKQSRSKYGAKQPKAGVPAPVKGKGKR.

D89 bears the 3-methylthioaspartic acid mark. Residues 101 to 136 are disordered; sequence SLDTSGVADRKQSRSKYGAKQPKAGVPAPVKGKGKR.

It belongs to the universal ribosomal protein uS12 family. As to quaternary structure, part of the 30S ribosomal subunit. Contacts proteins S8 and S17. May interact with IF1 in the 30S initiation complex.

Its function is as follows. With S4 and S5 plays an important role in translational accuracy. Interacts with and stabilizes bases of the 16S rRNA that are involved in tRNA selection in the A site and with the mRNA backbone. Located at the interface of the 30S and 50S subunits, it traverses the body of the 30S subunit contacting proteins on the other side and probably holding the rRNA structure together. The combined cluster of proteins S8, S12 and S17 appears to hold together the shoulder and platform of the 30S subunit. In Pelodictyon phaeoclathratiforme (strain DSM 5477 / BU-1), this protein is Small ribosomal subunit protein uS12.